The primary structure comprises 779 residues: Anion/proton exchange transporter GEF1 (779 aa).

Topologically, residues 1 to 75 (MPTTYVPINQ…REVIWDRAKT (75 aa)) are cytoplasmic. The helical transmembrane segment at 76-96 (FITLSSTAIVIGCIAGFLQVF) threads the bilayer. The Lumenal segment spans residues 97-154 (TETLVNWKTGHCQRNWLLNKSFCCNGVVNEVTSTSNLLLKRQEFECEAQGLWIAWKGH). Residues 155 to 175 (VSPFIIFMLLSVLFALISTLL) form a helical membrane-spanning segment. Over 176–177 (VK) the chain is Cytoplasmic. The chain crosses the membrane as a helical span at residues 178–198 (YVAPMATGSGISEIKVWVSGF). The Lumenal segment spans residues 199–203 (EYNKE). A helical transmembrane segment spans residues 204 to 224 (FLGFLTLVIKSVALPLAISSG). Residues 225–264 (LSVGKEGPSVHYATCCGYLLTKWLLRDTLTYSSQYEYITA) are Cytoplasmic-facing. The helical transmembrane segment at 265 to 285 (ASGAGVAVAFGAPIGGVLFGL) threads the bilayer. Topologically, residues 286–296 (EEIASANRFNS) are lumenal. The chain crosses the membrane as a helical span at residues 297–319 (STLWKSYYVALVAITTLKYIDPF). The Cytoplasmic segment spans residues 320 to 336 (RNGRVILFNVTYDRDWK). Residues 337–357 (VQEIPIFIALGIFGGLYGKYI) traverse the membrane as a helical segment. The Lumenal segment spans residues 358-369 (SKWNINFIHFRK). The helical transmembrane segment at 370-390 (MYLSSWPVQEVLFLATLTALI) threads the bilayer. The Cytoplasmic portion of the chain corresponds to 391 to 436 (SYFNEFLKLDMTESMGILFHECVKNDNTSTFSHRLCQLDENTHAFE). A helical transmembrane segment spans residues 437–457 (FLKIFTSLCFATVIRALLVVV). The Lumenal portion of the chain corresponds to 458–465 (SYGARVPA). Residues 466-486 (GIFVPSMAVGATFGRAVSLLV) traverse the membrane as a helical segment. Over 487-500 (ERFISGPSVITPGA) the chain is Cytoplasmic. The helical transmembrane segment at 501-523 (YAFLGAAATLSGITNLTLTVVVI) threads the bilayer. At 524–529 (MFELTG) the chain is on the lumenal side. Residues 530 to 552 (AFMYIIPLMIVVAITRIILSTSG) traverse the membrane as a helical segment. Residues 553–779 (ISGGIADQMI…FTTNRNGNVI (227 aa)) are Cytoplasmic-facing. 2 CBS domains span residues 591–659 (MSSK…VNST) and 688–744 (MNES…YREV).

It belongs to the chloride channel (TC 2.A.49) family. In terms of assembly, homodimer. Interacts with GET3. Proteolytically processed in the secretory pathway by protease KEX2 within the first extracellular loop. However, both the N- and C-terminal products of the cleavage reaction are required for assembly of a functional channel.

The protein resides in the golgi apparatus membrane. Its subcellular location is the endosome membrane. The protein localises to the prevacuolar compartment membrane. In terms of biological role, anion/proton exchange transporter involved in iron and copper cation homeostasis. Involved in intracellular iron metabolism during growth on fermentable and non fermentable carbon sources. Required for proper copper-loading and maturation of multicopper oxidase FET3. Important for adjusting intracellular compartment pH to more alkaline pH under iron limitation. May also transport chloride ions through the plasma membrane. The protein is Anion/proton exchange transporter GEF1 (GEF1) of Saccharomyces cerevisiae (strain ATCC 204508 / S288c) (Baker's yeast).